The chain runs to 226 residues: 2-C-methyl-D-erythritol 4-phosphate cytidylyltransferase (226 aa).

The protein belongs to the IspD/TarI cytidylyltransferase family. IspD subfamily.

The catalysed reaction is 2-C-methyl-D-erythritol 4-phosphate + CTP + H(+) = 4-CDP-2-C-methyl-D-erythritol + diphosphate. It functions in the pathway isoprenoid biosynthesis; isopentenyl diphosphate biosynthesis via DXP pathway; isopentenyl diphosphate from 1-deoxy-D-xylulose 5-phosphate: step 2/6. Functionally, catalyzes the formation of 4-diphosphocytidyl-2-C-methyl-D-erythritol from CTP and 2-C-methyl-D-erythritol 4-phosphate (MEP). The sequence is that of 2-C-methyl-D-erythritol 4-phosphate cytidylyltransferase from Bacillus cereus (strain ATCC 10987 / NRS 248).